A 166-amino-acid polypeptide reads, in one-letter code: MLSKELLAALNEQMNQEYFAAHAYMAMAAYCDKESYDGFANFYIEQAKEERFHGKKIYDYINDRGEHAIFDTIKAPKVEFSSILETFKDSLAQERDVTQRFYNLSELARNDKDYATISFLNWFLDEQVEEESTFETHIDYLTRIGDDCNTLYLYEKELAARSFNEQ.

The Ferritin-like diiron domain maps to 2–145; the sequence is LSKELLAALN…THIDYLTRIG (144 aa). Residues E17, E50, H53, E94, and Q127 each coordinate Fe cation.

It belongs to the ferritin family. Prokaryotic subfamily.

Its subcellular location is the cytoplasm. It catalyses the reaction 4 Fe(2+) + O2 + 6 H2O = 4 iron(III) oxide-hydroxide + 12 H(+). Its function is as follows. Iron-storage protein. The protein is Bacterial non-heme ferritin (ftnA) of Staphylococcus epidermidis (strain ATCC 12228 / FDA PCI 1200).